A 975-amino-acid polypeptide reads, in one-letter code: DNA primase (975 aa).

The segment at 919-958 (CIQHDHRDGRENVQFFLDFRPESATTIWTTLWSRCFSRKC) adopts a CHC2-type zinc-finger fold.

It belongs to the herpesviridae DNA primase family. Associates with the helicase and the primase-associated factor to form the helicase-primase factor.

Its subcellular location is the host nucleus. Essential component of the helicase/primase complex. Unwinds the DNA at the replication forks and generates single-stranded DNA for both leading and lagging strand synthesis. The primase initiates primer synthesis and thereby produces large amount of short RNA primers on the lagging strand that the polymerase elongates using dNTPs. This is DNA primase from Elephas maximus (Indian elephant).